The following is a 125-amino-acid chain: Mini-ribonuclease 3 (125 aa).

The active site involves aspartate 11.

The protein belongs to the MrnC RNase family. As to quaternary structure, homodimer. Requires Mg(2+) as cofactor.

It localises to the cytoplasm. Involved in correct processing of both the 5' and 3' ends of 23S rRNA precursor. Processes 30S rRNA precursor transcript even in absence of ribonuclease 3 (Rnc); Rnc processes 30S rRNA into smaller rRNA precursors. The protein is Mini-ribonuclease 3 of Acholeplasma laidlawii (strain PG-8A).